A 402-amino-acid polypeptide reads, in one-letter code: MSLCTLEINLSAIKNNYRLLQDICTTALVGAAVKANGYGIGAMQIAKALIEENCQYFFVATSEEGINLRKALNNDITILVLNGVFTHDALELIQYNLTPVLNNLKQIEIWQKFSNLKEKILPCYLHFNTGLNRFGLNYDEIEQLINDRDLLKGLDLQYIISHLAASEEMDNPYNLAQLNRFKDYLEYFPNVKASLANSGGIFLGQDYHFDLARPGAALYGLNSLIEVSYNLSYKEKFERNTPALATTVCINKCADVNTRLTYKVPLKGSYRLQNPVTLKAPIIHLQNLTLDSHIGYNMTFTTKRDSIIATLPLGYADGFSRNFSNQGEVFINSRSVPIVGRVSMDLINIDVTDLPPSEVFLGQEVEIIGNYCTPDKIASIIGTVGYEVLTSLGSRYKRKYIS.

Catalysis depends on lysine 34, which acts as the Proton acceptor; specific for D-alanine. Lysine 34 carries the N6-(pyridoxal phosphate)lysine modification. Arginine 133 lines the substrate pocket. In terms of domain architecture, RPE1 insert spans 226-271; the sequence is EVSYNLSYKEKFERNTPALATTVCINKCADVNTRLTYKVPLKGSYR. Residue tyrosine 296 is the Proton acceptor; specific for L-alanine of the active site. A substrate-binding site is contributed by methionine 344.

Belongs to the alanine racemase family. It depends on pyridoxal 5'-phosphate as a cofactor.

It carries out the reaction L-alanine = D-alanine. It functions in the pathway amino-acid biosynthesis; D-alanine biosynthesis; D-alanine from L-alanine: step 1/1. Its function is as follows. Catalyzes the interconversion of L-alanine and D-alanine. May also act on other amino acids. The protein is Alanine racemase (alr) of Rickettsia typhi (strain ATCC VR-144 / Wilmington).